Consider the following 494-residue polypeptide: DEAD-box ATP-dependent RNA helicase 20 (494 aa).

Basic and acidic residues predominate over residues 1-20 (MSRFDGRAADPGSYRDRRSE). A disordered region spans residues 1–39 (MSRFDGRAADPGSYRDRRSEGAFGGGTRAFAPTSKADSA). The span at 29-39 (AFAPTSKADSA) shows a compositional bias: low complexity. The short motif at 91-119 (REFRDVGFPEYVLQEITKAGFVEPTPIQS) is the Q motif element. The 176-residue stretch at 122–297 (WPMALRGRDL…RNFLFDPYKV (176 aa)) folds into the Helicase ATP-binding domain. Position 135–142 (135–142 (AETGSGKT)) interacts with ATP. Residues 245–248 (DEAD) carry the DEAD box motif. Positions 325–470 (KLVNLLEDIM…KVSPELANMG (146 aa)) constitute a Helicase C-terminal domain. Positions 465–494 (ELANMGRGAPPPSSGHRDRYRGYGGGRSWS) are disordered.

Belongs to the DEAD box helicase family. DDX5/DBP2 subfamily.

It is found in the nucleus. The catalysed reaction is ATP + H2O = ADP + phosphate + H(+). Functionally, ATP-dependent RNA helicase involved nonsense-mediated mRNA decay and ribosome biogenesis through rRNA processing. This chain is DEAD-box ATP-dependent RNA helicase 20, found in Oryza sativa subsp. japonica (Rice).